The following is a 687-amino-acid chain: Chloride channel protein ClC-Ka (687 aa).

A run of 5 helical transmembrane segments spans residues 52–72 (FLVA…FAIG), 94–114 (LSWT…SQSI), 161–181 (IFLG…AYLG), 204–224 (AAAV…LFSI), and 236–256 (YWRG…LGVF). Residues Glu259, Glu261, Asp278, and Glu281 each coordinate Ca(2+). 6 helical membrane passes run 282-302 (IFFF…YLFC), 325-345 (PSYA…PGVG), 396-416 (FTIF…LILA), 417-437 (TTIP…AAIG), 458-478 (VNPI…SGAV), and 486-506 (LLAF…MAVL). Topologically, residues 507-687 (AANAISQNCQ…STLINPPAPK (181 aa)) are cytoplasmic. 2 consecutive CBS domains span residues 551–609 (MNCN…QPAS) and 626–687 (CPTQ…PAPK).

Belongs to the chloride channel (TC 2.A.49) family. CLCNKA subfamily. In terms of assembly, homodimer. Interacts with BSND. As to expression, expressed predominantly in the kidney. Expressed strongly in the cortical thick ascending limb and the distal convoluted tubule, with minor expression in the S3 segment of the proximal tubule and the cortical collecting tubule.

It localises to the basolateral cell membrane. It catalyses the reaction chloride(in) = chloride(out). It carries out the reaction bromide(in) = bromide(out). The enzyme catalyses nitrate(in) = nitrate(out). The catalysed reaction is iodide(out) = iodide(in). Its activity is regulated as follows. Activated by extracellular Ca(2+) and inhibited by extracellular acidic pH. Its function is as follows. Anion-selective channel permeable to small monovalent anions with ion selectivity for chloride &gt; bromide &gt; nitrate &gt; iodide. Forms a homodimeric channel where each subunit has its own ion conduction pathway. Conducts double-barreled currents controlled by two types of gates, two fast gates that control each subunit independently and a slow common gate that opens and shuts off both subunits simultaneously. Assembles with the regulatory subunit BSND/Barttin for sorting at the basolateral plasma membrane domain. CLCNKA:BSND channels are activated upon membrane hyperpolarization mostly controlled by fast gating. Mediates transepithelial chloride transport from the lumen to interstitial compartment along the thin ascending limb of Henle's loop, contributing to generation of hypertonic medullary interstitium as a countercurrent system to achieve urine concentration. Conducts chloride currents in the stria vascularis of the inner ear to establish the endocochlear potential necessary for normal hearing. In Rattus norvegicus (Rat), this protein is Chloride channel protein ClC-Ka.